A 153-amino-acid polypeptide reads, in one-letter code: Insulin-like growth factor 1.S (153 aa).

Intrachain disulfides connect Cys29–Cys38, Cys54–Cys96, Cys66–Cys109, and Cys100–Cys109. A b region spans residues 49–77; the sequence is GPETLCGAELVDTLQFVCGDRGFYFSKPT. The tract at residues 78-89 is c; the sequence is GYGSNNRRSHHR. Residues 90-110 form an a region; it reads GIVDECCFQSCDFRRLEMYCA. Positions 111-118 are d; sequence PAKQAKSA. Positions 119–153 are cleaved as a propeptide — e peptide; that stretch reads RSVRTQRHTDMPKAQKEVHPKNTSRGNTGSRGFRM. Residues 119–153 form a disordered region; it reads RSVRTQRHTDMPKAQKEVHPKNTSRGNTGSRGFRM. The segment covering 125–138 has biased composition (basic and acidic residues); sequence RHTDMPKAQKEVHP. The segment covering 139-153 has biased composition (polar residues); that stretch reads KNTSRGNTGSRGFRM.

The protein belongs to the insulin family. In terms of tissue distribution, expressed in adult liver, lung, heart, kidney and peritoneal fat.

The protein localises to the secreted. In terms of biological role, the insulin-like growth factors, isolated from plasma, are structurally and functionally related to insulin but have a much higher growth-promoting activity. Promotes head development by inhibiting Wnt signaling during embryogenesis. Acts as a ligand for IGF1R. Binds to the alpha subunit of IGF1R, leading to the activation of the intrinsic tyrosine kinase activity which autophosphorylates tyrosine residues in the beta subunit thus initiatiating a cascade of down-stream signaling events leading to activation of the PI3K-AKT/PKB and the Ras-MAPK pathways. Binds to integrins. Its binding to integrins and subsequent ternary complex formation with integrins and IGFR1 are essential for IGF1 signaling. The chain is Insulin-like growth factor 1.S from Xenopus laevis (African clawed frog).